The primary structure comprises 308 residues: Porphobilinogen deaminase (308 aa).

Residue cysteine 241 is modified to S-(dipyrrolylmethanemethyl)cysteine.

Belongs to the HMBS family. As to quaternary structure, monomer. The cofactor is dipyrromethane.

The enzyme catalyses 4 porphobilinogen + H2O = hydroxymethylbilane + 4 NH4(+). It functions in the pathway porphyrin-containing compound metabolism; protoporphyrin-IX biosynthesis; coproporphyrinogen-III from 5-aminolevulinate: step 2/4. Tetrapolymerization of the monopyrrole PBG into the hydroxymethylbilane pre-uroporphyrinogen in several discrete steps. In Staphylococcus aureus (strain MSSA476), this protein is Porphobilinogen deaminase.